The chain runs to 122 residues: Large ribosomal subunit protein bL12 (122 aa).

It belongs to the bacterial ribosomal protein bL12 family. As to quaternary structure, homodimer. Part of the ribosomal stalk of the 50S ribosomal subunit. Forms a multimeric L10(L12)X complex, where L10 forms an elongated spine to which 2 to 4 L12 dimers bind in a sequential fashion. Binds GTP-bound translation factors.

Functionally, forms part of the ribosomal stalk which helps the ribosome interact with GTP-bound translation factors. Is thus essential for accurate translation. The chain is Large ribosomal subunit protein bL12 from Histophilus somni (strain 129Pt) (Haemophilus somnus).